A 241-amino-acid chain; its full sequence is Large ribosomal subunit protein uL1 (241 aa).

It belongs to the universal ribosomal protein uL1 family. As to quaternary structure, part of the 50S ribosomal subunit.

Functionally, binds directly to 23S rRNA. The L1 stalk is quite mobile in the ribosome, and is involved in E site tRNA release. Protein L1 is also a translational repressor protein, it controls the translation of the L11 operon by binding to its mRNA. The chain is Large ribosomal subunit protein uL1 from Streptomyces avermitilis (strain ATCC 31267 / DSM 46492 / JCM 5070 / NBRC 14893 / NCIMB 12804 / NRRL 8165 / MA-4680).